We begin with the raw amino-acid sequence, 427 residues long: Glutamate-1-semialdehyde 2,1-aminomutase (427 aa).

K265 carries the post-translational modification N6-(pyridoxal phosphate)lysine.

The protein belongs to the class-III pyridoxal-phosphate-dependent aminotransferase family. HemL subfamily. In terms of assembly, homodimer. Requires pyridoxal 5'-phosphate as cofactor.

Its subcellular location is the cytoplasm. It catalyses the reaction (S)-4-amino-5-oxopentanoate = 5-aminolevulinate. Its pathway is porphyrin-containing compound metabolism; protoporphyrin-IX biosynthesis; 5-aminolevulinate from L-glutamyl-tRNA(Glu): step 2/2. The chain is Glutamate-1-semialdehyde 2,1-aminomutase from Burkholderia thailandensis (strain ATCC 700388 / DSM 13276 / CCUG 48851 / CIP 106301 / E264).